We begin with the raw amino-acid sequence, 63 residues long: Alpha-conotoxin-like Am1.6 (63 aa).

Positions 1-21 are cleaved as a signal peptide; sequence MGMRMMFTVFLLVVLATTVVS. The propeptide occupies 22 to 46; it reads FTSYRASDGRNAAAKASDLIALTVR. Residues 50 to 52 are ser-Xaa-Pro motif, crucial for potent interaction with nAChR; it reads SRP.

The protein belongs to the conotoxin A superfamily. In terms of processing, is not hydroxylated. Contains 2 disulfide bonds. In terms of tissue distribution, expressed by the venom duct.

It is found in the secreted. Its function is as follows. Alpha-conotoxins act on postsynaptic membranes, they bind to the nicotinic acetylcholine receptors (nAChR) and thus inhibit them. The sequence is that of Alpha-conotoxin-like Am1.6 from Conus amadis (Amadis cone).